The following is a 253-amino-acid chain: Putative enoyl-CoA hydratase (253 aa).

Glu131 is a catalytic residue.

The protein belongs to the enoyl-CoA hydratase/isomerase family. Homohexamer; dimer of trimers.

It catalyses the reaction a (3S)-3-hydroxyacyl-CoA = a (2E)-enoyl-CoA + H2O. This Thermus thermophilus (strain ATCC 27634 / DSM 579 / HB8) protein is Putative enoyl-CoA hydratase.